A 110-amino-acid polypeptide reads, in one-letter code: UPF0060 membrane protein Mfla_2554 (110 aa).

A run of 4 helical transmembrane segments spans residues 7 to 27 (VALFVITALAEIIGCYLPYLW), 33 to 53 (SPLLLIPAAISLALFAWLLTL), 61 to 81 (VYAAYGGVYIFVAIFWLWVVD), and 83 to 103 (IIPSNWDFLGASVALLGMAII).

This sequence belongs to the UPF0060 family.

It is found in the cell inner membrane. The chain is UPF0060 membrane protein Mfla_2554 from Methylobacillus flagellatus (strain ATCC 51484 / DSM 6875 / VKM B-1610 / KT).